Reading from the N-terminus, the 617-residue chain is Type VII secretion systems protein EssD (617 aa).

Positions 420 to 448 are disordered; it reads QNHVTHGPKDSMVRSEGKHSISSHEMNSS. Basic and acidic residues predominate over residues 426 to 438; that stretch reads GPKDSMVRSEGKH.

Belongs to the EssD family. In terms of assembly, interacts (via C-terminal) with EssG; this interaction blocks EssD activity. Interacts with EssE.

It localises to the secreted. It is found in the cell membrane. Functionally, component of the type VII secretion system (Ess). Plays a role in Ess secretion during infection. Required for the efficient secretion of EsxA. Required for abscess formation and staphylococcal persistence in host tissue. Possesses a toxic DNase activity that is modulated by EssG by forming a nuclease toxin-antitoxin pair. This nuclease toxin targets competitor bacteria. The sequence is that of Type VII secretion systems protein EssD from Staphylococcus aureus (strain Newman).